Consider the following 545-residue polypeptide: ATP synthase F(1) complex subunit alpha, mitochondrial (545 aa).

5 residues coordinate ATP: glutamine 216, glycine 218, lysine 219, threonine 220, and serine 221. Threonine 220 serves as a coordination point for Mg(2+). Mg(2+) is bound at residue aspartate 304. ATP is bound by residues glutamine 465 and glutamine 467.

Belongs to the ATPase alpha/beta chains family. As to quaternary structure, homotrimer. Component of the ATP synthase complex composed at least of ATP5F1A/subunit alpha, ATP5F1B/subunit beta, ATP5MC1/subunit c (homooctomer), MT-ATP6/subunit a, MT-ATP8/subunit 8, ATP5ME/subunit e, ATP5MF/subunit f, ATP5MG/subunit g, ATP5MK/subunit k, ATP5MJ/subunit j, ATP5F1C/subunit gamma, ATP5F1D/subunit delta, ATP5F1E/subunit epsilon, ATP5PF/subunit F6, ATP5PB/subunit b, ATP5PD/subunit d, ATP5PO/subunit OSCP. ATP synthase complex consists of a soluble F(1) head domain (subunits alpha(3) and beta(3)) - the catalytic core - and a membrane F(0) domain - the membrane proton channel (subunits c, a, 8, e, f, g, k and j). These two domains are linked by a central stalk (subunits gamma, delta, and epsilon) rotating inside the F1 region and a stationary peripheral stalk (subunits F6, b, d, and OSCP).

It localises to the mitochondrion inner membrane. Functionally, subunit alpha, of the mitochondrial membrane ATP synthase complex (F(1)F(0) ATP synthase or Complex V) that produces ATP from ADP in the presence of a proton gradient across the membrane which is generated by electron transport complexes of the respiratory chain. ATP synthase complex consist of a soluble F(1) head domain - the catalytic core - and a membrane F(1) domain - the membrane proton channel. These two domains are linked by a central stalk rotating inside the F(1) region and a stationary peripheral stalk. During catalysis, ATP synthesis in the catalytic domain of F(1) is coupled via a rotary mechanism of the central stalk subunits to proton translocation. In vivo, can only synthesize ATP although its ATP hydrolase activity can be activated artificially in vitro. With the catalytic subunit beta (ATP5F1B), forms the catalytic core in the F(1) domain. Subunit alpha does not bear the catalytic high-affinity ATP-binding sites. The chain is ATP synthase F(1) complex subunit alpha, mitochondrial from Xenopus laevis (African clawed frog).